Reading from the N-terminus, the 236-residue chain is Small ribosomal subunit protein uS2c (236 aa).

The protein belongs to the universal ribosomal protein uS2 family.

It localises to the plastid. It is found in the chloroplast. The chain is Small ribosomal subunit protein uS2c (rps2) from Morus indica (Mulberry).